The chain runs to 177 residues: Large ribosomal subunit protein uL6 (177 aa).

The protein belongs to the universal ribosomal protein uL6 family. Part of the 50S ribosomal subunit.

This protein binds to the 23S rRNA, and is important in its secondary structure. It is located near the subunit interface in the base of the L7/L12 stalk, and near the tRNA binding site of the peptidyltransferase center. In Vibrio cholerae serotype O1 (strain ATCC 39315 / El Tor Inaba N16961), this protein is Large ribosomal subunit protein uL6.